The sequence spans 157 residues: MTHSYGYRRQTRKKFAKAYKTKGHVRISRYLTTYKVGEYVDIMVDGSQHKGMPYKLYHGRTGKVFNVNPRSIGVIVHRIVNGRYIEKRLHVKIEHVRPSNVKTALSKRYQANDQAKAEGNKAGKRVSTKRNPGQPLEAVQVQGAVNFQHPKVFREIF.

Residues 110–132 are disordered; sequence QANDQAKAEGNKAGKRVSTKRNP.

Belongs to the eukaryotic ribosomal protein eL21 family.

In Tetrahymena thermophila (strain SB210), this protein is Large ribosomal subunit protein eL21 (RPL21).